The following is a 180-amino-acid chain: Ribulose bisphosphate carboxylase small subunit, chloroplastic (180 aa).

Residues 1-56 (MALISSAAVTTVNRASSAQANLVAPFTGLKSSAGFPVTKKTNNDITSIASNGGRVN) constitute a chloroplast transit peptide.

It belongs to the RuBisCO small chain family. In terms of assembly, heterohexadecamer of 8 large and 8 small subunits.

The protein localises to the plastid. The protein resides in the chloroplast. In terms of biological role, ruBisCO catalyzes two reactions: the carboxylation of D-ribulose 1,5-bisphosphate, the primary event in carbon dioxide fixation, as well as the oxidative fragmentation of the pentose substrate. Both reactions occur simultaneously and in competition at the same active site. Although the small subunit is not catalytic it is essential for maximal activity. The chain is Ribulose bisphosphate carboxylase small subunit, chloroplastic from Medicago sativa (Alfalfa).